Reading from the N-terminus, the 1822-residue chain is Integrin beta-4 (1822 aa).

An N-terminal signal peptide occupies residues 1–27 (MAGPRPSPWARLLLAALISVSLSGTLA). The Extracellular portion of the chain corresponds to 28–710 (NRCKKAPVKS…HKKKDCPPGS (683 aa)). One can recognise a PSI domain in the interval 29-73 (RCKKAPVKSCTECVRVDKDCAYCTDEMFRDRRCNTQAELLAAGCQ). 8 cysteine pairs are disulfide-bonded: C30–C48, C38–C455, C41–C61, C51–C72, C245–C288, C457–C476, C468–C479, and C481–C490. In terms of domain architecture, VWFA spans 131–329 (DLYILMDFSN…IPIFAVTNYS (199 aa)). 2 residues coordinate Mg(2+): S139 and S141. Ca(2+) contacts are provided by S141, D144, D145, and D176. Positions 194–199 (WPNSDP) are involved in NRG1- and IGF1-binding. 4 residues coordinate Ca(2+): N228, D230, P232, and E233. E233 serves as a coordination point for Mg(2+). The N-linked (GlcNAc...) asparagine glycan is linked to N327. E350 serves as a coordination point for Ca(2+). I-EGF domains lie at 457 to 491 (CELQKEVRSARCSFNGDFVCGQCVCSEGWSGQTCN), 492 to 537 (CSTG…QFCE), 538 to 574 (YDNFQCPRTSGFLCNDRGRCSMGQCVCEPGWTGPSCD), and 575 to 615 (CPLS…TICE). A glycan (N-linked (GlcNAc...) asparagine) is linked at N491. 11 disulfides stabilise this stretch: C492–C520, C503–C518, C512–C523, C525–C536, C543–C557, C551–C562, C564–C573, C575–C598, C582–C596, C590–C601, and C603–C614. Residue N579 is glycosylated (N-linked (GlcNAc...) asparagine). Residue N617 is glycosylated (N-linked (GlcNAc...) asparagine). Intrachain disulfides connect C626/C671, C632/C651, C635/C648, and C680/C706. An N-linked (GlcNAc...) asparagine glycan is attached at N695. Residues 711-733 (FWWLIPLLLLLLPLLALLLLLCW) traverse the membrane as a helical segment. A palmitoylated on several cysteines region spans residues 732 to 749 (CWKYCACCKACLALLPCC). The Cytoplasmic segment spans residues 734-1822 (KYCACCKACL…THMDQQFFQT (1089 aa)). 3 positions are modified to phosphoserine: S771, S1069, and S1119. One can recognise a Calx-beta domain in the interval 979 to 1084 (VNITIIKEQA…QVRRFHVQLS (106 aa)). The segment at 1113–1140 (TSQMLSSQPPPHGDLGAPQNPNAKAAGS) is disordered. Fibronectin type-III domains are found at residues 1129–1218 (APQN…THQE) and 1222–1321 (EPGR…TQPK). The disordered stretch occupies residues 1400–1444 (LSASSGRSSDAEAPHGPPDDGGAGGKGGSLPRSATPGPPGEHLVN). Positions 1418–1427 (DDGGAGGKGG) are enriched in gly residues. A phosphoserine mark is found at S1454, S1457, and S1474. T1487 bears the Phosphothreonine mark. S1494 is subject to Phosphoserine. A disordered region spans residues 1495-1525 (LTRSEHSHSTTLPRDYSTLTSVSSHDSRLTA). The span at 1503–1518 (STTLPRDYSTLTSVSS) shows a compositional bias: polar residues. T1530 is subject to Phosphothreonine. Fibronectin type-III domains follow at residues 1530–1625 (TPTR…VHPQ) and 1643–1739 (APGP…SQDG). S1791 is modified (phosphoserine).

This sequence belongs to the integrin beta chain family. Heterodimer of an alpha and a beta subunit. Beta-4 associates with alpha-6. Interacts (via cytoplasmic region) with COL17A1 (via cytoplasmic region). Interacts (via cytoplasmic region) with DST isoform 3 (via N-terminus). Isoform beta-4a interacts (via cytoplasmic domain) with DST (via N-terminus). Interacts with RAC1. ITGA6:ITGB4 is found in a ternary complex with NRG1 and ERBB3. ITGA6:ITGB4 is found in a ternary complex with IGF1 and IGF1R. ITGA6:ITGB4 interacts with IGF2. Interacts with TMEM268; this interaction prevents ITGB4 degradation. In terms of processing, palmitoylated by DHHC3 at several cysteines of the membrane-proximal region, enhancing stability and cell surface expression. Palmitoylation also promotes secondary association with tertaspanins. In terms of tissue distribution, integrin alpha-6/beta-4 is predominantly expressed by epithelia. Isoform beta-4D is also expressed in colon and placenta. Isoform beta-4E is also expressed in epidermis, lung, duodenum, heart, spleen and stomach.

Its subcellular location is the cell membrane. The protein resides in the cell junction. The protein localises to the hemidesmosome. In terms of biological role, integrin alpha-6/beta-4 is a receptor for laminin. Plays a critical structural role in the hemidesmosome of epithelial cells. Is required for the regulation of keratinocyte polarity and motility. ITGA6:ITGB4 binds to NRG1 (via EGF domain) and this binding is essential for NRG1-ERBB signaling. ITGA6:ITGB4 binds to IGF1 and this binding is essential for IGF1 signaling. ITGA6:ITGB4 binds to IGF2 and this binding is essential for IGF2 signaling. This is Integrin beta-4 (ITGB4) from Homo sapiens (Human).